Here is a 221-residue protein sequence, read N- to C-terminus: Putative N-acetylmannosamine-6-phosphate 2-epimerase (221 aa).

It belongs to the NanE family.

It catalyses the reaction an N-acyl-D-glucosamine 6-phosphate = an N-acyl-D-mannosamine 6-phosphate. It functions in the pathway amino-sugar metabolism; N-acetylneuraminate degradation; D-fructose 6-phosphate from N-acetylneuraminate: step 3/5. Functionally, converts N-acetylmannosamine-6-phosphate (ManNAc-6-P) to N-acetylglucosamine-6-phosphate (GlcNAc-6-P). The chain is Putative N-acetylmannosamine-6-phosphate 2-epimerase from Clostridium perfringens (strain ATCC 13124 / DSM 756 / JCM 1290 / NCIMB 6125 / NCTC 8237 / Type A).